We begin with the raw amino-acid sequence, 97 residues long: Co-chaperonin GroES (97 aa).

This sequence belongs to the GroES chaperonin family. Heptamer of 7 subunits arranged in a ring. Interacts with the chaperonin GroEL.

Its subcellular location is the cytoplasm. Its function is as follows. Together with the chaperonin GroEL, plays an essential role in assisting protein folding. The GroEL-GroES system forms a nano-cage that allows encapsulation of the non-native substrate proteins and provides a physical environment optimized to promote and accelerate protein folding. GroES binds to the apical surface of the GroEL ring, thereby capping the opening of the GroEL channel. This is Co-chaperonin GroES from Gemmatimonas aurantiaca (strain DSM 14586 / JCM 11422 / NBRC 100505 / T-27).